The chain runs to 286 residues: Pantothenate synthetase (286 aa).

30–37 contributes to the ATP binding site; it reads MGNLHRGH. Histidine 37 (proton donor) is an active-site residue. Position 61 (glutamine 61) interacts with (R)-pantoate. Residue glutamine 61 coordinates beta-alanine. 149–152 is an ATP binding site; the sequence is GEKD. Glutamine 155 is a binding site for (R)-pantoate. Residues valine 178 and 186 to 189 each bind ATP; that span reads LSSR.

Belongs to the pantothenate synthetase family. Homodimer.

It localises to the cytoplasm. The catalysed reaction is (R)-pantoate + beta-alanine + ATP = (R)-pantothenate + AMP + diphosphate + H(+). It functions in the pathway cofactor biosynthesis; (R)-pantothenate biosynthesis; (R)-pantothenate from (R)-pantoate and beta-alanine: step 1/1. Catalyzes the condensation of pantoate with beta-alanine in an ATP-dependent reaction via a pantoyl-adenylate intermediate. The polypeptide is Pantothenate synthetase (Nitrosococcus oceani (strain ATCC 19707 / BCRC 17464 / JCM 30415 / NCIMB 11848 / C-107)).